Consider the following 618-residue polypeptide: Zinc finger protein 48 (618 aa).

An N-acetylmethionine modification is found at Met-1. Basic and acidic residues-rich tracts occupy residues 1-22 (MERA…EPQR) and 39-51 (EFEH…DLGF). 2 disordered regions span residues 1 to 51 (MERA…DLGF) and 78 to 109 (LWVQ…ASSD). Residue Lys-87 forms a Glycyl lysine isopeptide (Lys-Gly) (interchain with G-Cter in SUMO2) linkage. 2 C2H2-type zinc fingers span residues 112–134 (AVCG…QRTH) and 140–162 (YKCG…QRTH). The segment at 157 to 189 (KHQRTHSGEKPYRARPPAQGPPKIPRSRIPAGE) is disordered. Lys-179 is covalently cross-linked (Glycyl lysine isopeptide (Lys-Gly) (interchain with G-Cter in SUMO2)). 2 C2H2-type zinc fingers span residues 192–214 (TICG…QRTH) and 220–242 (YKCG…QRTH). The interval 235 to 271 (RIKHQRTHRGEQPPRPVVPRRQPSRAATAATQGPKAQ) is disordered. Lys-269 participates in a covalent cross-link: Glycyl lysine isopeptide (Lys-Gly) (interchain with G-Cter in SUMO2). 2 consecutive C2H2-type zinc fingers follow at residues 275-297 (YICT…QRSH) and 303-325 (FGCD…LRVH). Residue Lys-329 forms a Glycyl lysine isopeptide (Lys-Gly) (interchain with G-Cter in SUMO2) linkage. C2H2-type zinc fingers lie at residues 331-353 (YLCP…LRTH) and 359-381 (HACP…RLTH). A compositionally biased stretch (pro residues) spans 392-414 (YPLPALIPSPPPPPLGTSPPLTP). A disordered region spans residues 392–457 (YPLPALIPSP…DKPHKCPECG (66 aa)). Residues 415-432 (RSPSHSGEPFGLPGLEPE) are compositionally biased toward low complexity. Residues 451–473 (HKCPECGKGFRRSSDLVKHHRVH) form a C2H2-type 9 zinc finger. Lys-477 is covalently cross-linked (Glycyl lysine isopeptide (Lys-Gly) (interchain with G-Cter in SUMO2)). The C2H2-type 10 zinc-finger motif lies at 479–501 (YLCPECGKGFADSSARVKHLRTH). Positions 500 to 540 (THRGERARPPPPSTLLRPHNPPGPVPMAPRPRVRAQPSGPS) are disordered. The span at 508–528 (PPPPSTLLRPHNPPGPVPMAP) shows a compositional bias: pro residues. 2 consecutive C2H2-type zinc fingers follow at residues 543–565 (HVCG…RRTH) and 571–593 (YKCA…QRGH). A Glycyl lysine isopeptide (Lys-Gly) (interchain with G-Cter in SUMO2) cross-link involves residue Lys-610.

Belongs to the krueppel C2H2-type zinc-finger protein family.

It localises to the nucleus. Functionally, may be involved in transcriptional regulation. The polypeptide is Zinc finger protein 48 (ZNF48) (Homo sapiens (Human)).